The sequence spans 741 residues: Ribosome-releasing factor 2, mitochondrial (741 aa).

Residues 1-29 constitute a mitochondrion transit peptide; the sequence is MLKYEFLHGLQKRSHYLRQLSGQFFSRSY. One can recognise a tr-type G domain in the interval 31 to 310; sequence SKIRNIGILA…AVNSYLPAPE (280 aa). GTP contacts are provided by residues 40–47, 104–108, and 158–161; these read AHIDAGKT, DTPGH, and NKMD.

It belongs to the TRAFAC class translation factor GTPase superfamily. Classic translation factor GTPase family. EF-G/EF-2 subfamily.

Its subcellular location is the mitochondrion. In terms of biological role, mitochondrial GTPase that mediates the disassembly of ribosomes from messenger RNA at the termination of mitochondrial protein biosynthesis. Not involved in the GTP-dependent ribosomal translocation step during translation elongation. The polypeptide is Ribosome-releasing factor 2, mitochondrial (Drosophila ananassae (Fruit fly)).